The primary structure comprises 261 residues: Arcelin-5A (261 aa).

The N-terminal stretch at 1-21 (MASSKLLSLALFLVLLTHANS) is a signal peptide. Residues Asn43, Asn91, and Asn100 are each glycosylated (N-linked (GlcNAc...) asparagine). Cys167 and Cys203 are disulfide-bonded. A propeptide spanning residues 255–261 (ILLNNIL) is cleaved from the precursor.

Belongs to the leguminous lectin family. Monomer. Post-translationally, the C-terminal segment appears to be highly susceptible to proteolysis.

Seed storage. This carbohydrate-binding lectin has toxic effects on bean bruchid pests. The protein is Arcelin-5A (ARC5A) of Phaseolus vulgaris (Kidney bean).